Here is a 188-residue protein sequence, read N- to C-terminus: UPF0301 protein azo3459 (188 aa).

This sequence belongs to the UPF0301 (AlgH) family.

This Azoarcus sp. (strain BH72) protein is UPF0301 protein azo3459.